Consider the following 125-residue polypeptide: Large ribosomal subunit protein bL12 (125 aa).

The protein belongs to the bacterial ribosomal protein bL12 family. In terms of assembly, homodimer. Part of the ribosomal stalk of the 50S ribosomal subunit. Forms a multimeric L10(L12)X complex, where L10 forms an elongated spine to which 2 to 4 L12 dimers bind in a sequential fashion. Binds GTP-bound translation factors.

Its function is as follows. Forms part of the ribosomal stalk which helps the ribosome interact with GTP-bound translation factors. Is thus essential for accurate translation. The chain is Large ribosomal subunit protein bL12 from Thioalkalivibrio sulfidiphilus (strain HL-EbGR7).